The sequence spans 585 residues: Arginine--tRNA ligase (585 aa).

The short motif at 131–141 (ANPTGPMHVGH) is the 'HIGH' region element.

It belongs to the class-I aminoacyl-tRNA synthetase family. In terms of assembly, monomer.

Its subcellular location is the cytoplasm. It catalyses the reaction tRNA(Arg) + L-arginine + ATP = L-arginyl-tRNA(Arg) + AMP + diphosphate. This Brucella anthropi (strain ATCC 49188 / DSM 6882 / CCUG 24695 / JCM 21032 / LMG 3331 / NBRC 15819 / NCTC 12168 / Alc 37) (Ochrobactrum anthropi) protein is Arginine--tRNA ligase.